The chain runs to 95 residues: Cell division topological specificity factor (95 aa).

It belongs to the MinE family.

Functionally, prevents the cell division inhibition by proteins MinC and MinD at internal division sites while permitting inhibition at polar sites. This ensures cell division at the proper site by restricting the formation of a division septum at the midpoint of the long axis of the cell. The chain is Cell division topological specificity factor from Methylorubrum extorquens (strain CM4 / NCIMB 13688) (Methylobacterium extorquens).